A 410-amino-acid polypeptide reads, in one-letter code: Cysteine desulfurase IscS (410 aa).

Pyridoxal 5'-phosphate contacts are provided by residues 80-81 (AT), Asn160, Gln188, and 208-210 (SGH). Lys211 bears the N6-(pyridoxal phosphate)lysine mark. Thr248 is a pyridoxal 5'-phosphate binding site. Catalysis depends on Cys334, which acts as the Cysteine persulfide intermediate. Cys334 provides a ligand contact to [2Fe-2S] cluster.

Belongs to the class-V pyridoxal-phosphate-dependent aminotransferase family. NifS/IscS subfamily. As to quaternary structure, homodimer. Forms a heterotetramer with IscU, interacts with other sulfur acceptors. Requires pyridoxal 5'-phosphate as cofactor.

The protein localises to the cytoplasm. It carries out the reaction (sulfur carrier)-H + L-cysteine = (sulfur carrier)-SH + L-alanine. Its pathway is cofactor biosynthesis; iron-sulfur cluster biosynthesis. Master enzyme that delivers sulfur to a number of partners involved in Fe-S cluster assembly, tRNA modification or cofactor biosynthesis. Catalyzes the removal of elemental sulfur atoms from cysteine to produce alanine. Functions as a sulfur delivery protein for Fe-S cluster synthesis onto IscU, an Fe-S scaffold assembly protein, as well as other S acceptor proteins. This is Cysteine desulfurase IscS from Rickettsia bellii (strain OSU 85-389).